The primary structure comprises 321 residues: Glycerol-3-phosphate dehydrogenase [NAD(P)+] (321 aa).

4 residues coordinate NADPH: S14, F15, R35, and K109. The sn-glycerol 3-phosphate site is built by K109 and G137. A141 provides a ligand contact to NADPH. The sn-glycerol 3-phosphate site is built by K192, D252, S262, R263, and N264. K192 serves as the catalytic Proton acceptor. R263 is a binding site for NADPH. NADPH contacts are provided by L287 and E289.

The protein belongs to the NAD-dependent glycerol-3-phosphate dehydrogenase family.

The protein localises to the cytoplasm. The enzyme catalyses sn-glycerol 3-phosphate + NAD(+) = dihydroxyacetone phosphate + NADH + H(+). The catalysed reaction is sn-glycerol 3-phosphate + NADP(+) = dihydroxyacetone phosphate + NADPH + H(+). It participates in membrane lipid metabolism; glycerophospholipid metabolism. Catalyzes the reduction of the glycolytic intermediate dihydroxyacetone phosphate (DHAP) to sn-glycerol 3-phosphate (G3P), the key precursor for phospholipid synthesis. This Rickettsia felis (strain ATCC VR-1525 / URRWXCal2) (Rickettsia azadi) protein is Glycerol-3-phosphate dehydrogenase [NAD(P)+].